Here is a 197-residue protein sequence, read N- to C-terminus: Imidazoleglycerol-phosphate dehydratase (197 aa).

Belongs to the imidazoleglycerol-phosphate dehydratase family.

It is found in the cytoplasm. It catalyses the reaction D-erythro-1-(imidazol-4-yl)glycerol 3-phosphate = 3-(imidazol-4-yl)-2-oxopropyl phosphate + H2O. It functions in the pathway amino-acid biosynthesis; L-histidine biosynthesis; L-histidine from 5-phospho-alpha-D-ribose 1-diphosphate: step 6/9. The protein is Imidazoleglycerol-phosphate dehydratase of Pseudomonas putida (strain ATCC 700007 / DSM 6899 / JCM 31910 / BCRC 17059 / LMG 24140 / F1).